Here is a 624-residue protein sequence, read N- to C-terminus: Phosphoenolpyruvate carboxykinase (ATP) 1 (624 aa).

A disordered region spans residues 1-22 (MASPNGGVTTYDYDDSDSAAPV). 322–329 (GLSGTGKT) contributes to the ATP binding site.

The protein belongs to the phosphoenolpyruvate carboxykinase (ATP) family. As to quaternary structure, homohexamer. In terms of tissue distribution, green leaves but not in roots or etiolated shoots.

The protein resides in the cytoplasm. It catalyses the reaction oxaloacetate + ATP = phosphoenolpyruvate + ADP + CO2. The protein operates within carbohydrate biosynthesis; gluconeogenesis. In Urochloa panicoides (Panic liverseed grass), this protein is Phosphoenolpyruvate carboxykinase (ATP) 1 (PCK1).